A 623-amino-acid chain; its full sequence is Protein Atg16l2 (623 aa).

Over residues 64 to 79 the composition is skewed to basic and acidic residues; that stretch reads PKDAISTRHEDWREEV. A disordered region spans residues 64–93; sequence PKDAISTRHEDWREEVSGTGPDQVSSPASL. A coiled-coil region spans residues 116–229; the sequence is VKKSAALDTL…ANQALVSQEL (114 aa). WD repeat units lie at residues 338–377, 382–421, 424–458, 459–502, 504–543, 550–589, and 593–623; these read AHLS…LEAN, GAGG…SKET, GHKD…LGRA, YCSR…CIQV, PVQG…IRQV, KCSS…LETS, and PHCT…VLWH.

It belongs to the WD repeat ATG16 family. As to quaternary structure, homooligomer. Heterooligomer with ATG16L2. Interacts with ATG5. Self-oligomerizes to form a 800-kDa complex composed of ATG12-ATG5 and ATG16L2. Interacts with RAB33B. As to expression, widely expressed.

It localises to the cytoplasm. The protein resides in the cytosol. In terms of biological role, may play a role in regulating epithelial homeostasis in an ATG16L1-dependent manner. The protein is Protein Atg16l2 (Atg16l2) of Mus musculus (Mouse).